Reading from the N-terminus, the 406-residue chain is Endoglucanase 1 (406 aa).

Residues 1–43 (MNSKKIGAMIAAAVLSLIVMTPAATRKIVQRQTRNSSTAVENS) form the signal peptide. Composition is skewed to polar residues over residues 30–41 (QRQTRNSSTAVE) and 51–62 (ENVPVSQTHTND). Residues 30-62 (QRQTRNSSTAVENSAADESETENVPVSQTHTND) form a disordered region. Glu-210 functions as the Proton donor in the catalytic mechanism. Glu-330 (nucleophile) is an active-site residue.

The protein belongs to the glycosyl hydrolase 5 (cellulase A) family.

It carries out the reaction Endohydrolysis of (1-&gt;4)-beta-D-glucosidic linkages in cellulose, lichenin and cereal beta-D-glucans.. This is Endoglucanase 1 (Eg I) from Ruminococcus albus.